The sequence spans 341 residues: Uroporphyrinogen decarboxylase (341 aa).

Substrate-binding positions include 23–27, Phe42, Asp73, Tyr148, Ser203, and His318; that span reads RQAGR.

Belongs to the uroporphyrinogen decarboxylase family. As to quaternary structure, homodimer.

Its subcellular location is the cytoplasm. It carries out the reaction uroporphyrinogen III + 4 H(+) = coproporphyrinogen III + 4 CO2. It functions in the pathway porphyrin-containing compound metabolism; protoporphyrin-IX biosynthesis; coproporphyrinogen-III from 5-aminolevulinate: step 4/4. Functionally, catalyzes the decarboxylation of four acetate groups of uroporphyrinogen-III to yield coproporphyrinogen-III. This Brucella melitensis biotype 1 (strain ATCC 23456 / CCUG 17765 / NCTC 10094 / 16M) protein is Uroporphyrinogen decarboxylase.